Reading from the N-terminus, the 330-residue chain is Nodulation protein D 2 (330 aa).

Positions 6 to 63 (LDLNLLVALDALITERNLSSAARKINLSQPAMSAAVARLRKHFRDELFGMRGRELVLS) constitute an HTH lysR-type domain. A DNA-binding region (H-T-H motif) is located at residues 23 to 42 (LSSAARKINLSQPAMSAAVA). The segment at 308-330 (RVTSSPEDAEPPGHFVRSVSPLP) is disordered.

Belongs to the LysR transcriptional regulatory family.

In terms of biological role, nodD regulates the expression of the nodABCFE genes which encode other nodulation proteins. NodD is also a negative regulator of its own expression. Binds flavonoids as inducers. This Bradyrhizobium diazoefficiens (strain JCM 10833 / BCRC 13528 / IAM 13628 / NBRC 14792 / USDA 110) protein is Nodulation protein D 2 (nodD2).